The chain runs to 1249 residues: DNA repair protein REV1 (1249 aa).

One can recognise a BRCT domain in the interval T44 to L131. The segment at L253–K323 is disordered. The segment covering Q259–T275 has biased composition (basic and acidic residues). The span at R294–P319 shows a compositional bias: polar residues. The interaction with target DNA stretch occupies residues F350–S360. DCTP is bound by residues R355, D421 to F425, S508 to R514, N520, and D568. The UmuC domain maps to V417–G651. Residue D421 participates in Mg(2+) binding. Mg(2+) is bound by residues D568 and E569. Interaction with target DNA regions lie at residues G651–M654 and R707–N715. The span at A1035 to T1047 shows a compositional bias: basic and acidic residues. A disordered region spans residues A1035–K1109. A compositionally biased stretch (polar residues) spans H1048–P1057. Positions K1072–N1078 match the Nuclear localization signal motif. The tract at residues F1150–T1249 is protein interaction domain; mediates interaction with DNA polymerase zeta.

It belongs to the DNA polymerase type-Y family. In terms of assembly, interacts with FAAP20. Monomer. Interacts with the DNA polymerase zeta which is composed of REV3L and MAD2L2; the interaction with MAD2L2 is direct and requires that REV3L is in its closed conformation. Interacts with POLH, POLI and POLK. As to expression, ubiquitous.

The protein resides in the nucleus. Deoxycytidyl transferase involved in DNA repair. Transfers a dCMP residue from dCTP to the 3'-end of a DNA primer in a template-dependent reaction. May assist in the first step in the bypass of abasic lesions by the insertion of a nucleotide opposite the lesion. Required for normal induction of mutations by physical and chemical agents. The sequence is that of DNA repair protein REV1 (Rev1) from Mus musculus (Mouse).